Here is a 267-residue protein sequence, read N- to C-terminus: 4-hydroxy-tetrahydrodipicolinate reductase (267 aa).

8–13 contributes to the NAD(+) binding site; sequence GASGRM. R35 contributes to the NADP(+) binding site. NAD(+) contacts are provided by residues 98–100 and 122–125; these read GTT and APNM. H155 serves as the catalytic Proton donor/acceptor. H156 is a binding site for (S)-2,3,4,5-tetrahydrodipicolinate. The active-site Proton donor is the K159. 165-166 contacts (S)-2,3,4,5-tetrahydrodipicolinate; the sequence is GT.

This sequence belongs to the DapB family.

The protein resides in the cytoplasm. It carries out the reaction (S)-2,3,4,5-tetrahydrodipicolinate + NAD(+) + H2O = (2S,4S)-4-hydroxy-2,3,4,5-tetrahydrodipicolinate + NADH + H(+). The catalysed reaction is (S)-2,3,4,5-tetrahydrodipicolinate + NADP(+) + H2O = (2S,4S)-4-hydroxy-2,3,4,5-tetrahydrodipicolinate + NADPH + H(+). The protein operates within amino-acid biosynthesis; L-lysine biosynthesis via DAP pathway; (S)-tetrahydrodipicolinate from L-aspartate: step 4/4. In terms of biological role, catalyzes the conversion of 4-hydroxy-tetrahydrodipicolinate (HTPA) to tetrahydrodipicolinate. In Hahella chejuensis (strain KCTC 2396), this protein is 4-hydroxy-tetrahydrodipicolinate reductase.